The sequence spans 955 residues: Iron-responsive element-binding protein 2 (955 aa).

Cysteine 504, cysteine 570, and cysteine 573 together coordinate [4Fe-4S] cluster.

It belongs to the aconitase/IPM isomerase family. [4Fe-4S] cluster is required as a cofactor. In terms of processing, ubiquitinated and degraded by the proteasome in presence of high level of iron and oxygen.

It localises to the cytoplasm. Functionally, RNA-binding protein that binds to iron-responsive elements (IRES), which are stem-loop structures found in the 5'-UTR of ferritin, and delta aminolevulinic acid synthase mRNAs, and in the 3'-UTR of transferrin receptor mRNA. Binding to the IRE element in ferritin results in the repression of its mRNA translation. Binding of the protein to the transferrin receptor mRNA inhibits the degradation of this otherwise rapidly degraded mRNA. This chain is Iron-responsive element-binding protein 2 (ireb2), found in Xenopus laevis (African clawed frog).